Reading from the N-terminus, the 252-residue chain is MVNKEEAQRLKELGNKCFQEGKYEEAVKYFSDAITNDPLDHVLYSNLSGAFASLGRFYEALESANKCISIKKDWPKGYIRKGCAEHGLRQLSNAEKTYLEGLKIDPNNKSLQDALSKVRNENMLENAQLIAHLNNIIENDPQLKSYKEENSNYPHELLNTIKSINSNPMNIRIILSTCHPKISEGVEKFFGFKFTGEGNDAEERQRQQREEEERRKKKEEEERKKKEEEEMKKQNRTPEQIQGDEHKLKVMN.

3 TPR repeats span residues 7-40 (AQRL…DPLD), 41-74 (HVLY…KKDW), and 75-108 (PKGY…DPNN). Residues 197–239 (EGNDAEERQRQQREEEERRKKKEEEERKKKEEEEMKKQNRTPE) adopt a coiled-coil conformation. A disordered region spans residues 199–252 (NDAEERQRQQREEEERRKKKEEEERKKKEEEEMKKQNRTPEQIQGDEHKLKVMN). Composition is skewed to basic and acidic residues over residues 201-233 (AEER…EMKK) and 243-252 (GDEHKLKVMN).

As to quaternary structure, monomer. Homodimer. Forms a complex composed of HOP and chaperones HSP70 and HSP90; the interaction is stronger in the absence of ATP. Interacts (via TPR 1, 2, 3, 7, 8 and 9 repeats) with HSP70 (via C-terminus); the interaction is direct and is stronger in the absence of ATP. Interacts (via TPR 4, 5 and 6 repeats) with HSP90 (via C-terminus); the interaction is direct.

The protein localises to the cytoplasm. Functionally, acts as a co-chaperone and mediates the association of the chaperones HSP70 and HSP90 probably facilitating substrate transfer from HSP70 to HSP90. Stimulates HSP70 ATPase activity and, in contrast, inhibits HSP90 ATPase activity. The polypeptide is Hsp70-Hsp90 organising protein (Plasmodium falciparum).